Reading from the N-terminus, the 122-residue chain is Large ribosomal subunit protein uL14c (122 aa).

It belongs to the universal ribosomal protein uL14 family. In terms of assembly, part of the 50S ribosomal subunit.

It localises to the plastid. Its subcellular location is the chloroplast. In terms of biological role, binds to 23S rRNA. The chain is Large ribosomal subunit protein uL14c from Chara vulgaris (Common stonewort).